The primary structure comprises 259 residues: Global transcriptional regulator CodY (259 aa).

The tract at residues 1–155 is GAF domain; the sequence is MELLAKTRKL…SSTVVGMEIL (155 aa). The H-T-H motif DNA-binding region spans 203 to 222; that stretch reads ASKIADRVGITRSVIVNALR. Position 215 is a phosphoserine (serine 215).

It belongs to the CodY family.

The protein resides in the cytoplasm. In terms of biological role, DNA-binding global transcriptional regulator which is involved in the adaptive response to starvation and acts by directly or indirectly controlling the expression of numerous genes in response to nutrient availability. During rapid exponential growth, CodY is highly active and represses genes whose products allow adaptation to nutrient depletion. The sequence is that of Global transcriptional regulator CodY from Bacillus mycoides (strain KBAB4) (Bacillus weihenstephanensis).